The following is a 320-amino-acid chain: Aspartate carbamoyltransferase catalytic subunit (320 aa).

Positions 57 and 58 each coordinate carbamoyl phosphate. Lys85 contributes to the L-aspartate binding site. The carbamoyl phosphate site is built by Arg107, His141, and Gln144. Residues Arg174 and Arg228 each contribute to the L-aspartate site. Carbamoyl phosphate contacts are provided by Gly269 and Pro270.

The protein belongs to the aspartate/ornithine carbamoyltransferase superfamily. ATCase family. In terms of assembly, heterododecamer (2C3:3R2) of six catalytic PyrB chains organized as two trimers (C3), and six regulatory PyrI chains organized as three dimers (R2).

It carries out the reaction carbamoyl phosphate + L-aspartate = N-carbamoyl-L-aspartate + phosphate + H(+). The protein operates within pyrimidine metabolism; UMP biosynthesis via de novo pathway; (S)-dihydroorotate from bicarbonate: step 2/3. Catalyzes the condensation of carbamoyl phosphate and aspartate to form carbamoyl aspartate and inorganic phosphate, the committed step in the de novo pyrimidine nucleotide biosynthesis pathway. The chain is Aspartate carbamoyltransferase catalytic subunit from Mycobacterium ulcerans (strain Agy99).